The sequence spans 319 residues: MAGRTARLVLLAGAAALASGSQGDREPVYRDCVLRCEERNCSGGALKHFRSRQPIYMSLAGWTCRDDCKYECMWVTVGLYLQEGQKVPQFHGKWPFSRFLCFQEPASAVASFLNGLASLVMLCRYRTSVPASSPMYPTCVAFAWVSLNAWFWSTVFHTRDTDLTEKMDYFCASTVILHSIYLCCVRTVGLQHPAMASAFRALLLLLLTAHVSYLSLIHFDYGYNMAANVAIGLLNAAWWLAWCLWNQRLPHVHKCVAVVLLLQGLSLLELLDFPPLFWVLDAHAIWHISTIPVHVLFFSFLEDDSLYLLKESEAKVKLD.

An N-terminal signal peptide occupies residues 1 to 23 (MAGRTARLVLLAGAAALASGSQG). At 24 to 101 (DREPVYRDCV…GKWPFSRFLC (78 aa)) the chain is on the lumenal side. An N-linked (GlcNAc...) asparagine glycan is attached at asparagine 40. The chain crosses the membrane as a helical span at residues 102–122 (FQEPASAVASFLNGLASLVML). Residues 123-135 (CRYRTSVPASSPM) are Cytoplasmic-facing. The chain crosses the membrane as a helical span at residues 136-156 (YPTCVAFAWVSLNAWFWSTVF). Topologically, residues 157–169 (HTRDTDLTEKMDY) are lumenal. Residues 170–190 (FCASTVILHSIYLCCVRTVGL) form a helical membrane-spanning segment. Over 191 to 200 (QHPAMASAFR) the chain is Cytoplasmic. Residues 201–221 (ALLLLLLTAHVSYLSLIHFDY) form a helical membrane-spanning segment. At 222–224 (GYN) the chain is on the lumenal side. Residues 225–245 (MAANVAIGLLNAAWWLAWCLW) traverse the membrane as a helical segment. The Cytoplasmic segment spans residues 246–257 (NQRLPHVHKCVA). Residues 258–278 (VVLLLQGLSLLELLDFPPLFW) traverse the membrane as a helical segment. The Lumenal segment spans residues 279–281 (VLD). The chain crosses the membrane as a helical span at residues 282 to 302 (AHAIWHISTIPVHVLFFSFLE). Topologically, residues 303–319 (DDSLYLLKESEAKVKLD) are cytoplasmic.

Belongs to the PGAP3 family.

It localises to the golgi apparatus membrane. Its function is as follows. Involved in the fatty acid remodeling steps of GPI-anchor maturation where the unsaturated acyl chain at sn-2 of inositol phosphate is replaced by a saturated stearoyl chain. May catalyze the first step of the fatty acid remodeling, by removing the unsaturated acyl chain at sn-2 of inositol phosphate, generating a lyso-GPI intermediate. The fatty acid remodeling steps is critical for the integration of GPI-APs into lipid rafts. In Bos taurus (Bovine), this protein is GPI-specific phospholipase A2-like PGAP3.